The primary structure comprises 172 residues: Adenine phosphoribosyltransferase (172 aa).

The protein belongs to the purine/pyrimidine phosphoribosyltransferase family. Homodimer.

The protein resides in the cytoplasm. The enzyme catalyses AMP + diphosphate = 5-phospho-alpha-D-ribose 1-diphosphate + adenine. Its pathway is purine metabolism; AMP biosynthesis via salvage pathway; AMP from adenine: step 1/1. In terms of biological role, catalyzes a salvage reaction resulting in the formation of AMP, that is energically less costly than de novo synthesis. This is Adenine phosphoribosyltransferase from Lactiplantibacillus plantarum (strain ATCC BAA-793 / NCIMB 8826 / WCFS1) (Lactobacillus plantarum).